The primary structure comprises 314 residues: MAAAARPVDVVRHFPCSSSVAASSSLLLSRSKSRLASPAAAAASSMRRRLVLGVGAAAAPAVAALAASATPAALRDCAATLLITAGAYSLVRAFDGLTARRLIEQNLSRKIVHVLSGVLFMSSWPLFSNSTEARFFAAIVPLLNCIRLLTYGLRLSTDEALVKSVTREGKPEELLRGPLYYVIVLLVSVLVFWRQSPIGIVSLSMMSGGDGFADIVGRRYGSAKLPFNENKSWIGSISMFISGFLLSALMLFYFSCLGYFTVCWDLALGKLALVALAATVVECIPVNDVVDDNISVPLATMLAAYLLFGYSSCC.

A chloroplast-targeting transit peptide spans 1–62 (MAAAARPVDV…GVGAAAAPAV (62 aa)). The next 7 membrane-spanning stretches (helical) occupy residues 72–91 (AALRDCAATLLITAGAYSLV), 111–131 (IVHVLSGVLFMSSWPLFSNST), 135–155 (FFAAIVPLLNCIRLLTYGLRL), 181–201 (YVIVLLVSVLVFWRQSPIGIV), 234–254 (IGSISMFISGFLLSALMLFYF), 266–286 (LALGKLALVALAATVVECIPV), and 294–314 (ISVPLATMLAAYLLFGYSSCC).

Belongs to the polyprenol kinase family.

Its subcellular location is the plastid. The protein resides in the chloroplast membrane. It catalyses the reaction phytol + CTP = phytyl phosphate + CDP + H(+). It participates in cofactor biosynthesis; tocopherol biosynthesis. Its function is as follows. Involved in the activation and reutilization of phytol from chlorophyll degradation in plant metabolism, including tocopherol biosynthesis. Catalyzes the conversion of phytol to phytol monophosphate (PMP). This is Probable phytol kinase 1, chloroplastic from Oryza sativa subsp. japonica (Rice).